The sequence spans 121 residues: Small ribosomal subunit protein uS13 (121 aa).

A disordered region spans residues 90-121 (RHRRGLPVRGQHTKNNARTRKGKKVSIAGRKK).

The protein belongs to the universal ribosomal protein uS13 family. As to quaternary structure, part of the 30S ribosomal subunit. Forms a loose heterodimer with protein S19. Forms two bridges to the 50S subunit in the 70S ribosome.

Functionally, located at the top of the head of the 30S subunit, it contacts several helices of the 16S rRNA. In the 70S ribosome it contacts the 23S rRNA (bridge B1a) and protein L5 of the 50S subunit (bridge B1b), connecting the 2 subunits; these bridges are implicated in subunit movement. Contacts the tRNAs in the A and P-sites. This is Small ribosomal subunit protein uS13 from Lactiplantibacillus plantarum (strain ATCC BAA-793 / NCIMB 8826 / WCFS1) (Lactobacillus plantarum).